We begin with the raw amino-acid sequence, 90 residues long: Large ribosomal subunit protein bL27 (90 aa).

The segment at 1–21 is disordered; it reads MAHKKAGGSSRNGRDSHGKRL.

It belongs to the bacterial ribosomal protein bL27 family.

The polypeptide is Large ribosomal subunit protein bL27 (Nitrobacter winogradskyi (strain ATCC 25391 / DSM 10237 / CIP 104748 / NCIMB 11846 / Nb-255)).